A 319-amino-acid chain; its full sequence is Acetyl-coenzyme A carboxylase carboxyl transferase subunit alpha (319 aa).

The CoA carboxyltransferase C-terminal domain maps to 35–296; that stretch reads NLDEEVQRLR…KAQLLDDLSE (262 aa).

Belongs to the AccA family. As to quaternary structure, acetyl-CoA carboxylase is a heterohexamer composed of biotin carboxyl carrier protein (AccB), biotin carboxylase (AccC) and two subunits each of ACCase subunit alpha (AccA) and ACCase subunit beta (AccD).

It localises to the cytoplasm. The catalysed reaction is N(6)-carboxybiotinyl-L-lysyl-[protein] + acetyl-CoA = N(6)-biotinyl-L-lysyl-[protein] + malonyl-CoA. Its pathway is lipid metabolism; malonyl-CoA biosynthesis; malonyl-CoA from acetyl-CoA: step 1/1. Its function is as follows. Component of the acetyl coenzyme A carboxylase (ACC) complex. First, biotin carboxylase catalyzes the carboxylation of biotin on its carrier protein (BCCP) and then the CO(2) group is transferred by the carboxyltransferase to acetyl-CoA to form malonyl-CoA. This is Acetyl-coenzyme A carboxylase carboxyl transferase subunit alpha from Sodalis glossinidius (strain morsitans).